The following is a 772-amino-acid chain: DnaJ homolog subfamily C member 16 (772 aa).

The N-terminal stretch at 1-25 (MELKRLGVSWRFLMVLVLILQSLSA) is a signal peptide. Topologically, residues 26–533 (LDFDPYRVLG…ESLLHSNWRE (508 aa)) are cytoplasmic. Residues 29–93 (DPYRVLGVSR…EKRTNYDHYG (65 aa)) enclose the J domain. The region spanning 119 to 245 (FDESFFHFPF…LRQFVESLLP (127 aa)) is the Thioredoxin domain. Residues 534–554 (MMPLLSLIFSALFILFGTVMV) traverse the membrane as a helical; Anchor for type IV membrane protein segment. Residues 555–772 (QAFSDSNEER…FYIPSWPELD (218 aa)) are Extracellular-facing. The tract at residues 560–591 (SNEERESHPADKEEVPEKAGKTEPSFTKESSS) is disordered. The span at 561–580 (NEERESHPADKEEVPEKAGK) shows a compositional bias: basic and acidic residues. N-linked (GlcNAc...) asparagine glycosylation occurs at Asn-629.

The protein resides in the endoplasmic reticulum membrane. Plays an important role in regulating the size of autophagosomes during the formation process. This is DnaJ homolog subfamily C member 16 (Dnajc16) from Mus musculus (Mouse).